Reading from the N-terminus, the 224-residue chain is Ribonuclease HII (224 aa).

In terms of domain architecture, RNase H type-2 spans 1–219 (MMIAGIDEAG…VENIREELKK (219 aa)). Residues Asp-7, Glu-8, and Asp-105 each coordinate a divalent metal cation.

It belongs to the RNase HII family. It depends on Mn(2+) as a cofactor. The cofactor is Mg(2+).

The protein resides in the cytoplasm. The catalysed reaction is Endonucleolytic cleavage to 5'-phosphomonoester.. Functionally, endonuclease that specifically degrades the RNA of RNA-DNA hybrids. In Methanosarcina barkeri (strain Fusaro / DSM 804), this protein is Ribonuclease HII.